A 358-amino-acid chain; its full sequence is Aromatic amino acid aminotransferase (358 aa).

Position 214 is an N6-(pyridoxal phosphate)lysine (K214).

Belongs to the class-II pyridoxal-phosphate-dependent aminotransferase family. As to quaternary structure, homodimer. The cofactor is pyridoxal 5'-phosphate.

It carries out the reaction an aromatic L-alpha-amino acid + 2-oxoglutarate = an aromatic oxo-acid + L-glutamate. In terms of biological role, aminotransferase that catalyzes the conversion of aromatic amino acids and 2-oxoglutarate into corresponding aromatic oxo acids and L-glutamate. This is Aromatic amino acid aminotransferase from Rhodococcus erythropolis (strain PR4 / NBRC 100887).